Reading from the N-terminus, the 399-residue chain is uncharacterized protein (399 aa).

This is an uncharacterized protein from Aquifex aeolicus (strain VF5).